The primary structure comprises 387 residues: Succinyl-diaminopimelate desuccinylase (387 aa).

A Zn(2+)-binding site is contributed by His74. The active site involves Asp76. Asp107 contacts Zn(2+). Glu142 functions as the Proton acceptor in the catalytic mechanism. 3 residues coordinate Zn(2+): Glu143, Glu171, and His360.

The protein belongs to the peptidase M20A family. DapE subfamily. Homodimer. Zn(2+) is required as a cofactor. The cofactor is Co(2+).

The catalysed reaction is N-succinyl-(2S,6S)-2,6-diaminopimelate + H2O = (2S,6S)-2,6-diaminopimelate + succinate. It functions in the pathway amino-acid biosynthesis; L-lysine biosynthesis via DAP pathway; LL-2,6-diaminopimelate from (S)-tetrahydrodipicolinate (succinylase route): step 3/3. Functionally, catalyzes the hydrolysis of N-succinyl-L,L-diaminopimelic acid (SDAP), forming succinate and LL-2,6-diaminopimelate (DAP), an intermediate involved in the bacterial biosynthesis of lysine and meso-diaminopimelic acid, an essential component of bacterial cell walls. The sequence is that of Succinyl-diaminopimelate desuccinylase from Rhodopseudomonas palustris (strain BisA53).